The chain runs to 150 residues: Ribosome maturation factor RimP (150 aa).

The protein belongs to the RimP family.

The protein localises to the cytoplasm. Its function is as follows. Required for maturation of 30S ribosomal subunits. The polypeptide is Ribosome maturation factor RimP (Thermotoga neapolitana (strain ATCC 49049 / DSM 4359 / NBRC 107923 / NS-E)).